Consider the following 143-residue polypeptide: Transcriptional regulator MraZ (143 aa).

SpoVT-AbrB domains follow at residues 5–47 (TYTP…PREE) and 76–119 (ADEQ…DAAA).

This sequence belongs to the MraZ family. In terms of assembly, forms oligomers.

Its subcellular location is the cytoplasm. The protein localises to the nucleoid. This is Transcriptional regulator MraZ from Corynebacterium diphtheriae (strain ATCC 700971 / NCTC 13129 / Biotype gravis).